A 99-amino-acid polypeptide reads, in one-letter code: Large ribosomal subunit protein bL21 (99 aa).

This sequence belongs to the bacterial ribosomal protein bL21 family. As to quaternary structure, part of the 50S ribosomal subunit. Contacts protein L20.

Functionally, this protein binds to 23S rRNA in the presence of protein L20. The polypeptide is Large ribosomal subunit protein bL21 (Deinococcus geothermalis (strain DSM 11300 / CIP 105573 / AG-3a)).